The following is a 391-amino-acid chain: Oxytocin receptor (391 aa).

The Extracellular segment spans residues 1 to 38; the sequence is MEGAFAANWSAEAVNGSAAPPGTEGNRTAGPPQRNEAL. N-linked (GlcNAc...) asparagine glycans are attached at residues asparagine 8, asparagine 15, and asparagine 26. Residues 39-63 form a helical membrane-spanning segment; the sequence is ARVEVAVLSLILFLALSGNACVLLA. Over 64-74 the chain is Cytoplasmic; the sequence is LRTTRHKHSRL. The helical transmembrane segment at 75-97 threads the bilayer; the sequence is FFFMKHLSIADLAVAVFQVLPQL. The Extracellular portion of the chain corresponds to 98–113; the sequence is LWDITFRFYGPDLLCR. Cysteine 112 and cysteine 187 are disulfide-bonded. The helical transmembrane segment at 114-135 threads the bilayer; it reads LVKYLQVVGMFASTYLLLLMSL. At 136–154 the chain is on the cytoplasmic side; it reads DRCLAICQPLRSLRRRTDR. A helical membrane pass occupies residues 155 to 175; that stretch reads LAVLATWLGCLVASAPQVHIF. The Extracellular segment spans residues 176-202; sequence SLREVADGVFDCWAVFIQPWGPKAYIT. A helical transmembrane segment spans residues 203–225; that stretch reads WITLAVYIVPVIVLAACYGLISF. The Cytoplasmic portion of the chain corresponds to 226–277; that stretch reads KIWQNLRLKTEAAAAEASAGAEGAAADCAGRAALARVSNVKLISKAKIRTVK. Residues 278–296 form a helical membrane-spanning segment; sequence MTFIVVLAFIVCWTPFFFK. The Extracellular portion of the chain corresponds to 297 to 311; it reads QMWSVWDADAPKEAS. The chain crosses the membrane as a helical span at residues 312 to 334; it reads AFIIAMLLASLNSCCNPWIYMLF. At 335–391 the chain is on the cytoplasmic side; sequence TGHLFQDLVQRFLCCSFRRLKGSQLGETSVTKKIHSYTFVLSRHSSSQRSCSQPSTV. Position 370 is a phosphoserine (serine 370).

This sequence belongs to the G-protein coupled receptor 1 family. Vasopressin/oxytocin receptor subfamily.

The protein localises to the cell membrane. Its function is as follows. Receptor for oxytocin. The activity of this receptor is mediated by G proteins which activate a phosphatidylinositol-calcium second messenger system. This chain is Oxytocin receptor (OXTR), found in Ovis aries (Sheep).